A 186-amino-acid polypeptide reads, in one-letter code: Bifunctional protein PyrR (186 aa).

The PRPP-binding signature appears at 101–113; sequence VVLVDDVLYTGRT.

The protein belongs to the purine/pyrimidine phosphoribosyltransferase family. PyrR subfamily.

The enzyme catalyses UMP + diphosphate = 5-phospho-alpha-D-ribose 1-diphosphate + uracil. In terms of biological role, regulates the transcription of the pyrimidine nucleotide (pyr) operon in response to exogenous pyrimidines. Functionally, also displays a weak uracil phosphoribosyltransferase activity which is not physiologically significant. The protein is Bifunctional protein PyrR of Syntrophobacter fumaroxidans (strain DSM 10017 / MPOB).